Consider the following 257-residue polypeptide: MSILSLVGLGISKKFITDSAIETLSNSDIIIFDRYTSRSCDINVDVLRRLVKGEREFIEADRSLLENNSKAIIDYLDKGYNVSIASIGDALIATTHVSLLIEAKHRGHEVKVIPGISVHCYLISKSLLSSYKFGKSVTVTFPYNDFIDPTPYNVIKDNKERGLHTILYLDLKNEKAMTANEALQILLRLEERHKKSVLSKSDIIIVGARLGCDDERIIALKVEEATSFDFGNTPHIIIIPGNLHYMEADAIKWILRS.

S-adenosyl-L-methionine contacts are provided by residues isoleucine 11, aspartate 89, isoleucine 92, 117–118 (SV), leucine 169, leucine 210, and histidine 235.

The protein belongs to the diphthine synthase family. As to quaternary structure, homodimer.

The enzyme catalyses 2-[(3S)-amino-3-carboxypropyl]-L-histidyl-[translation elongation factor 2] + 3 S-adenosyl-L-methionine = diphthine-[translation elongation factor 2] + 3 S-adenosyl-L-homocysteine + 3 H(+). It functions in the pathway protein modification; peptidyl-diphthamide biosynthesis. In terms of biological role, S-adenosyl-L-methionine-dependent methyltransferase that catalyzes the trimethylation of the amino group of the modified target histidine residue in translation elongation factor 2 (EF-2), to form an intermediate called diphthine. The three successive methylation reactions represent the second step of diphthamide biosynthesis. This Saccharolobus solfataricus (strain ATCC 35092 / DSM 1617 / JCM 11322 / P2) (Sulfolobus solfataricus) protein is Diphthine synthase.